Here is a 431-residue protein sequence, read N- to C-terminus: Enolase (431 aa).

Gln-163 is a binding site for (2R)-2-phosphoglycerate. Glu-205 acts as the Proton donor in catalysis. Mg(2+) contacts are provided by Asp-242, Glu-288, and Asp-315. Residues Lys-340, Arg-369, Ser-370, and Lys-391 each contribute to the (2R)-2-phosphoglycerate site. The active-site Proton acceptor is the Lys-340.

Belongs to the enolase family. The cofactor is Mg(2+).

Its subcellular location is the cytoplasm. The protein localises to the secreted. It is found in the cell surface. The enzyme catalyses (2R)-2-phosphoglycerate = phosphoenolpyruvate + H2O. Its pathway is carbohydrate degradation; glycolysis; pyruvate from D-glyceraldehyde 3-phosphate: step 4/5. Functionally, catalyzes the reversible conversion of 2-phosphoglycerate (2-PG) into phosphoenolpyruvate (PEP). It is essential for the degradation of carbohydrates via glycolysis. This is Enolase from Bacillus cereus (strain B4264).